The chain runs to 643 residues: Threonine--tRNA ligase (643 aa).

Residues M1–T62 form the TGS domain. Positions D239–P537 are catalytic. Positions 333, 384, and 514 each coordinate Zn(2+).

This sequence belongs to the class-II aminoacyl-tRNA synthetase family. Homodimer. Requires Zn(2+) as cofactor.

It is found in the cytoplasm. It catalyses the reaction tRNA(Thr) + L-threonine + ATP = L-threonyl-tRNA(Thr) + AMP + diphosphate + H(+). Its function is as follows. Catalyzes the attachment of threonine to tRNA(Thr) in a two-step reaction: L-threonine is first activated by ATP to form Thr-AMP and then transferred to the acceptor end of tRNA(Thr). Also edits incorrectly charged L-seryl-tRNA(Thr). In Lactobacillus gasseri (strain ATCC 33323 / DSM 20243 / BCRC 14619 / CIP 102991 / JCM 1131 / KCTC 3163 / NCIMB 11718 / NCTC 13722 / AM63), this protein is Threonine--tRNA ligase.